The primary structure comprises 1052 residues: Multidrug resistance protein MdtB (1052 aa).

Transmembrane regions (helical) follow at residues 15 to 37 (LFIL…GIIG), 345 to 362 (FELL…YLFL), 367 to 389 (ATII…MYFL), 396 to 418 (LTLM…VIEN), 438 to 460 (GEIG…PLLF), 472 to 494 (FAVT…TPMM), 535 to 557 (HPWL…YLLI), 867 to 889 (LWLI…ESFI), 909 to 931 (LMLT…IGIV), 968 to 990 (ILMT…GVGA), and 1000 to 1022 (MVGG…YLLF). The interval 1032–1052 (KNRHRDEDIDSSELLNGQEPQ) is disordered.

This sequence belongs to the resistance-nodulation-cell division (RND) (TC 2.A.6) family. MdtB subfamily. As to quaternary structure, part of a tripartite efflux system composed of MdtA, MdtB and MdtC. MdtB forms a heteromultimer with MdtC.

The protein localises to the cell inner membrane. The sequence is that of Multidrug resistance protein MdtB from Yersinia pseudotuberculosis serotype I (strain IP32953).